The following is a 205-amino-acid chain: Allergen Asp f 15 homolog (205 aa).

It belongs to the cerato-platanin family.

The protein localises to the secreted. The chain is Allergen Asp f 15 homolog from Arthroderma benhamiae (strain ATCC MYA-4681 / CBS 112371) (Trichophyton mentagrophytes).